The chain runs to 428 residues: Serine--tRNA ligase (428 aa).

Thr-235 to Glu-237 contacts L-serine. Residue Arg-266 to Glu-268 participates in ATP binding. Residue Glu-289 participates in L-serine binding. Glu-353–Ser-356 lines the ATP pocket. Ser-389 serves as a coordination point for L-serine.

Belongs to the class-II aminoacyl-tRNA synthetase family. Type-1 seryl-tRNA synthetase subfamily. In terms of assembly, homodimer. The tRNA molecule binds across the dimer.

Its subcellular location is the cytoplasm. The enzyme catalyses tRNA(Ser) + L-serine + ATP = L-seryl-tRNA(Ser) + AMP + diphosphate + H(+). The catalysed reaction is tRNA(Sec) + L-serine + ATP = L-seryl-tRNA(Sec) + AMP + diphosphate + H(+). It functions in the pathway aminoacyl-tRNA biosynthesis; selenocysteinyl-tRNA(Sec) biosynthesis; L-seryl-tRNA(Sec) from L-serine and tRNA(Sec): step 1/1. Functionally, catalyzes the attachment of serine to tRNA(Ser). Is also able to aminoacylate tRNA(Sec) with serine, to form the misacylated tRNA L-seryl-tRNA(Sec), which will be further converted into selenocysteinyl-tRNA(Sec). This is Serine--tRNA ligase from Shewanella baltica (strain OS155 / ATCC BAA-1091).